Here is a 279-residue protein sequence, read N- to C-terminus: Proteasome subunit beta 2 (279 aa).

Positions 1–53 (MAAAFDPSGRFPDLFTSVGTSSFSAFLSKAAPELLPGRRPLPPGMATGLTPHA) are cleaved as a propeptide — removed in mature form; by autocatalysis. Thr54 functions as the Nucleophile in the catalytic mechanism.

The protein belongs to the peptidase T1B family. As to quaternary structure, the 20S proteasome core is composed of 14 alpha and 14 beta subunits that assemble into four stacked heptameric rings, resulting in a barrel-shaped structure. The two inner rings, each composed of seven catalytic beta subunits, are sandwiched by two outer rings, each composed of seven alpha subunits. The catalytic chamber with the active sites is on the inside of the barrel. Has a gated structure, the ends of the cylinder being occluded by the N-termini of the alpha-subunits. Is capped by the proteasome-associated ATPase, ARC.

It localises to the cytoplasm. The enzyme catalyses Cleavage of peptide bonds with very broad specificity.. Its pathway is protein degradation; proteasomal Pup-dependent pathway. Its activity is regulated as follows. The formation of the proteasomal ATPase ARC-20S proteasome complex, likely via the docking of the C-termini of ARC into the intersubunit pockets in the alpha-rings, may trigger opening of the gate for substrate entry. Interconversion between the open-gate and close-gate conformations leads to a dynamic regulation of the 20S proteasome proteolysis activity. Component of the proteasome core, a large protease complex with broad specificity involved in protein degradation. The polypeptide is Proteasome subunit beta 2 (Salinispora tropica (strain ATCC BAA-916 / DSM 44818 / JCM 13857 / NBRC 105044 / CNB-440)).